A 426-amino-acid polypeptide reads, in one-letter code: Molybdopterin molybdenumtransferase 1 (426 aa).

This sequence belongs to the MoeA family. It depends on Mg(2+) as a cofactor.

The catalysed reaction is adenylyl-molybdopterin + molybdate = Mo-molybdopterin + AMP + H(+). It functions in the pathway cofactor biosynthesis; molybdopterin biosynthesis. Catalyzes the insertion of molybdate into adenylated molybdopterin with the concomitant release of AMP. This Mycobacterium tuberculosis (strain ATCC 25618 / H37Rv) protein is Molybdopterin molybdenumtransferase 1 (moeA1).